The primary structure comprises 106 residues: Nucleoid-associated protein XC_3243 (106 aa).

Residues 82–106 (DAESKERMGSATAGMQLPPGMKLPF) form a disordered region.

This sequence belongs to the YbaB/EbfC family. In terms of assembly, homodimer.

Its subcellular location is the cytoplasm. It is found in the nucleoid. In terms of biological role, binds to DNA and alters its conformation. May be involved in regulation of gene expression, nucleoid organization and DNA protection. The polypeptide is Nucleoid-associated protein XC_3243 (Xanthomonas campestris pv. campestris (strain 8004)).